Reading from the N-terminus, the 575-residue chain is Serine/threonine-protein kinase STY46 (575 aa).

A disordered region spans residues 116 to 140; sequence ADLDSTSNDAGHSSPTRKSIHPPPA. Polar residues predominate over residues 118-132; it reads LDSTSNDAGHSSPTR. The ACT domain maps to 178–252; the sequence is EITFSTEDKP…AKIELQSQSW (75 aa). Positions 290 to 543 constitute a Protein kinase domain; sequence LKFGHKIASG…EIIEQLQEIA (254 aa). Residues 296–304 and Lys317 each bind ATP; that span reads IASGSYGDL. Asp411 functions as the Proton acceptor in the catalytic mechanism. Position 443 is a phosphothreonine (Thr443).

The protein belongs to the protein kinase superfamily. Ser/Thr protein kinase family. In terms of processing, autophosphorylated on serine and threonine residues. Autophosphorylated at Thr-443.

Its subcellular location is the cytoplasm. It is found in the cytosol. It carries out the reaction L-seryl-[protein] + ATP = O-phospho-L-seryl-[protein] + ADP + H(+). The catalysed reaction is L-threonyl-[protein] + ATP = O-phospho-L-threonyl-[protein] + ADP + H(+). With respect to regulation, activated by autophosphorylation at Thr-443. Its function is as follows. Serine/threonine protein kinase that specifically phosphorylates chloroplast precursor proteins in the cytosol within the cleavable presequences (transit peptides). May be part of a cytosolic regulatory network involved in chloroplast protein import. Does not phosphorylate mitochondrion precursor proteins. Specific for ATP and does not utilize other NTPs. Plays a role in chloroplast biogenesis and differentiation in cotyledons, possibly through phosphorylation of chloroplast preproteins. The protein is Serine/threonine-protein kinase STY46 of Arabidopsis thaliana (Mouse-ear cress).